Here is a 65-residue protein sequence, read N- to C-terminus: Small ribosomal subunit protein eS27 (65 aa).

Zn(2+) contacts are provided by cysteine 20, cysteine 23, cysteine 39, and cysteine 42. The C4-type zinc-finger motif lies at 20–42 (CIDCGNEQIVFSNPATTVRCLVC).

The protein belongs to the eukaryotic ribosomal protein eS27 family. In terms of assembly, part of the 30S ribosomal subunit. It depends on Zn(2+) as a cofactor.

The chain is Small ribosomal subunit protein eS27 from Thermococcus onnurineus (strain NA1).